The following is a 239-amino-acid chain: Lipoprotein-releasing system ATP-binding protein LolD (239 aa).

The ABC transporter domain maps to 9–239 (LQVQHVSKHY…AATSPTGLAE (231 aa)). 45 to 52 (GSSGSGKS) lines the ATP pocket.

The protein belongs to the ABC transporter superfamily. Lipoprotein translocase (TC 3.A.1.125) family. In terms of assembly, the complex is composed of two ATP-binding proteins (LolD) and two transmembrane proteins (LolC and LolE).

The protein resides in the cell inner membrane. Part of the ABC transporter complex LolCDE involved in the translocation of mature outer membrane-directed lipoproteins, from the inner membrane to the periplasmic chaperone, LolA. Responsible for the formation of the LolA-lipoprotein complex in an ATP-dependent manner. This chain is Lipoprotein-releasing system ATP-binding protein LolD, found in Shewanella frigidimarina (strain NCIMB 400).